A 228-amino-acid polypeptide reads, in one-letter code: ATP-dependent dethiobiotin synthetase BioD (228 aa).

13–18 (DIGKTF) provides a ligand contact to ATP. Thr-17 is a Mg(2+) binding site. Lys-38 is an active-site residue. Ser-42 contributes to the substrate binding site. ATP is bound by residues Asp-55, 116–119 (EGSG), 179–180 (NK), and 208–210 (PKI). Mg(2+)-binding residues include Asp-55 and Glu-116.

This sequence belongs to the dethiobiotin synthetase family. Homodimer. It depends on Mg(2+) as a cofactor.

It is found in the cytoplasm. The enzyme catalyses (7R,8S)-7,8-diammoniononanoate + CO2 + ATP = (4R,5S)-dethiobiotin + ADP + phosphate + 3 H(+). It participates in cofactor biosynthesis; biotin biosynthesis; biotin from 7,8-diaminononanoate: step 1/2. Functionally, catalyzes a mechanistically unusual reaction, the ATP-dependent insertion of CO2 between the N7 and N8 nitrogen atoms of 7,8-diaminopelargonic acid (DAPA, also called 7,8-diammoniononanoate) to form a ureido ring. The sequence is that of ATP-dependent dethiobiotin synthetase BioD from Clostridium perfringens (strain ATCC 13124 / DSM 756 / JCM 1290 / NCIMB 6125 / NCTC 8237 / Type A).